A 432-amino-acid polypeptide reads, in one-letter code: MKFTLVATVLLTFSLSAFAVEYPVLTTASPDQVGFDSQKLHRLDGWIQNQIDAGYPSINLLVIKDNHIVLQKAWGYAKKYDGSTLLAHPIRATTNTMYDLASNTKMYATNFALQKLVYEGKIDVNDLVSKYIPGFKDMPGDKIKGKDKLRIIDILHHVAGFPADPQYPNKNVAGKLFSQSKSTTLEMIKKTPLEYQPGSKHIYSDVDYMILGFIVESITAMPLDRYVETTIYKPLGLKHTVFNPLMKGFTPPQIAATELHGNTRDGVIHFPNIRTNTLWGQVHDEKAWYSMGGVSGHAGLFSDTHDMAVLMQVMLNGGGYGNVKLFDDKTVAQFTRRSPEDATFGLGWRVNGNASMTPTFGVLASPQTYGHTGWTGTLTSIDPVNHMAIVILGNRPHSPVANPKVNPNVFVSGLLPAATYGWIVDRIYGSLK.

The helical; Signal-anchor transmembrane segment at 7-25 (ATVLLTFSLSAFAVEYPVL) threads the bilayer.

This sequence belongs to the peptidase S12 family. YfeW subfamily.

Its subcellular location is the cell inner membrane. It catalyses the reaction Preferential cleavage: (Ac)2-L-Lys-D-Ala-|-D-Ala. Also transpeptidation of peptidyl-alanyl moieties that are N-acyl substituents of D-alanine.. The polypeptide is Putative D-alanyl-D-alanine carboxypeptidase (Salmonella schwarzengrund (strain CVM19633)).